Here is a 422-residue protein sequence, read N- to C-terminus: MNSQLLFDDLAQRGLIAQTTDLEQLIALFRQPQTLYCGFDPTAGSLHIGHLVPLIMLKRFQDAGHQGIALIGGATGMIGDPSFKASERSLNSAETVAAWVNALATQIQQLMTPHLTQPLVMVNNADWMQSIGVIAFFRDIGKHFSVNAMIQRESVKQRLARPDQGISFTEFSYSLLQSYDFAQLNQTHQCALQIGGNDQWGNIVSGIDLTRRLNGTTVHGLTLPLITKSDGTKFGKTEGGAIWLDAAKTSPYMFYQFWLNCDDADVYRFLRYYTFLSVEQIEQIEATDKAQVGKPSAQRILAEEMTRFVHGHAGLESAQRISQALFSGQLNQLNLAELKQLEQDGLPCRQLAHVSDVVTLLLETGLASSKRQAREWLENGAIRINGERWNEQTLAQTFALYDQYYIVQRGKKQFAMVKLAQV.

Y36 contacts L-tyrosine. The 'HIGH' region signature appears at 41–50; it reads PTAGSLHIGH. L-tyrosine-binding residues include Y173 and Q177. The 'KMSKS' region signature appears at 233–237; that stretch reads KFGKT. K236 provides a ligand contact to ATP. One can recognise an S4 RNA-binding domain in the interval 355-419; sequence SDVVTLLLET…GKKQFAMVKL (65 aa).

It belongs to the class-I aminoacyl-tRNA synthetase family. TyrS type 1 subfamily. Homodimer.

Its subcellular location is the cytoplasm. It carries out the reaction tRNA(Tyr) + L-tyrosine + ATP = L-tyrosyl-tRNA(Tyr) + AMP + diphosphate + H(+). In terms of biological role, catalyzes the attachment of tyrosine to tRNA(Tyr) in a two-step reaction: tyrosine is first activated by ATP to form Tyr-AMP and then transferred to the acceptor end of tRNA(Tyr). The polypeptide is Tyrosine--tRNA ligase 1 (Vibrio vulnificus (strain YJ016)).